A 67-amino-acid polypeptide reads, in one-letter code: Conotoxin reg3.8 (67 aa).

Positions 1–22 (MMSKLGVLLTICLLLFPLSVLP) are cleaved as a signal peptide. The propeptide occupies 23–50 (LDGDQLADQPARHAQSAERNARFHPVKR). Intrachain disulfides connect Cys-51/Cys-65, Cys-52/Cys-63, and Cys-57/Cys-66. Cys-66 carries the post-translational modification Cysteine amide.

Belongs to the conotoxin M superfamily. As to expression, expressed by the venom duct.

The protein localises to the secreted. The protein is Conotoxin reg3.8 of Conus regius (Crown cone).